The following is a 569-amino-acid chain: Aspartic proteinase 3 (569 aa).

The first 21 residues, 1–21 (MKLKTVRSAVLSSLFASQVLG), serve as a signal peptide directing secretion. Residues 22–67 (KIIPAANKRDDDSNSKFVKLPFHKLYGDSLENVGSDKKPEVRLLKR) constitute a propeptide that is removed on maturation. The region spanning 83-475 (YSVDLEVGTP…DLENLEISMA (393 aa)) is the Peptidase A1 domain. Residue Asn-95 is glycosylated (N-linked (GlcNAc...) asparagine). Asp-101 is a catalytic residue. N-linked (GlcNAc...) asparagine glycans are attached at residues Asn-203, Asn-232, Asn-242, Asn-245, Asn-299, and Asn-358. The active site involves Asp-371. N-linked (GlcNAc...) asparagine glycans are attached at residues Asn-480, Asn-522, and Asn-532. Residue Asn-548 is the site of GPI-anchor amidated asparagine attachment. The propeptide at 549 to 569 (VGDHIVPSLPLTLISLLFAFI) is removed in mature form.

Belongs to the peptidase A1 family. In terms of assembly, consists of an alpha and a beta subunit, which are maintained together by a disulfide bond. The zymogen is transported to the periplasm, where the propeptide is removed and the enzyme is further subjected to an internal, autocatalytic cleavage to generate an alpha/beta two-subunit endopeptidase. The proteolytic processing at the cell surface is regulated by the environmental pH. In terms of processing, extensively N-glycosylated.

It is found in the cell membrane. The enzyme catalyses Hydrolyzes various precursor proteins with Arg or Lys in P1, and commonly Arg or Lys also in P2. The P3 amino acid is usually non-polar, but otherwise additional basic amino acids are favorable in both non-prime and prime positions.. Cleaves proteins C-terminally to mono- and paired-basic residues. Involved in the shedding of a subset of GPI-anchored plasma membrane proteins from the cell surface, including itself, GAS1 and MSB2. May also play a role in the maturation of GPI-mannoproteins associated with the cell wall. Can process the alpha-mating factor precursor. Required for cell wall integrity. This Saccharomyces cerevisiae (strain ATCC 204508 / S288c) (Baker's yeast) protein is Aspartic proteinase 3 (YPS1).